The following is a 267-amino-acid chain: MKGILGRKVGMTQIYTELGQRIPVTVVEVKPNVVSKVLTVEKNGYFATQLATVEKKAKRVNRPLAGQFIQAKTTPKQYIKEIRGMEGYELGQEVNASIFSAGELVDITGISKGKGFAGTIKRWNQHIGPKSHGGGGGSQPVRQTGSLGDISGNRVVKGMTMPGHLGSEKTTVQNLEIVKVDTVNNLLLVKGSIPGAKKSFVIIKQAVKGLPTKEAIKLVNVKEVVKMNELIEKAKKFNIEVTVGMTSAELEPLIHKAEEEQAAEGDK.

Positions 124 to 147 are disordered; it reads NQHIGPKSHGGGGGSQPVRQTGSL.

Belongs to the universal ribosomal protein uL3 family. As to quaternary structure, part of the 50S ribosomal subunit. Forms a cluster with proteins L14 and L19.

Its function is as follows. One of the primary rRNA binding proteins, it binds directly near the 3'-end of the 23S rRNA, where it nucleates assembly of the 50S subunit. The protein is Large ribosomal subunit protein uL3 of Mycoplasmopsis agalactiae (strain NCTC 10123 / CIP 59.7 / PG2) (Mycoplasma agalactiae).